Here is a 706-residue protein sequence, read N- to C-terminus: Polyribonucleotide nucleotidyltransferase (706 aa).

Mg(2+) is bound by residues Asp490 and Asp496. The KH domain maps to Pro556–Ile615. In terms of domain architecture, S1 motif spans Gly625–Lys693.

The protein belongs to the polyribonucleotide nucleotidyltransferase family. Mg(2+) serves as cofactor.

It localises to the cytoplasm. The enzyme catalyses RNA(n+1) + phosphate = RNA(n) + a ribonucleoside 5'-diphosphate. Functionally, involved in mRNA degradation. Catalyzes the phosphorolysis of single-stranded polyribonucleotides processively in the 3'- to 5'-direction. This Jannaschia sp. (strain CCS1) protein is Polyribonucleotide nucleotidyltransferase.